A 998-amino-acid chain; its full sequence is SEC23-interacting protein (998 aa).

The interaction with SEC23A stretch occupies residues 1 to 363 (MADRKANGGG…YTEEFSEKLE (363 aa)). Positions 50–246 (LPGEDSTDVG…AQQQVPARPA (197 aa)) are disordered. The segment covering 54–63 (DSTDVGEEDS) has biased composition (acidic residues). A compositionally biased stretch (polar residues) spans 65 to 78 (LGQTSTHTSTPQTF). Residues 79 to 88 (SYFSQVSSSS) show a composition bias toward low complexity. Polar residues-rich tracts occupy residues 94-108 (IGQSPLTTSAMSAGQ), 143-158 (PPSQMGTSTYSPSQPS), and 232-241 (AMQSPAQQQV). Ser-600 carries the phosphoserine modification. The region spanning 640–703 (EEPLTLHGTL…NFVKLKAAKL (64 aa)) is the SAM domain. The tract at residues 720–742 (TKGQDESAPKTKEMASPSSESNE) is disordered. The span at 722-732 (GQDESAPKTKE) shows a compositional bias: basic and acidic residues. Phosphoserine occurs at positions 735, 748, and 924. The DDHD domain occupies 777 to 987 (LDFEPEIFFA…ALLLLKEIYR (211 aa)).

It belongs to the PA-PLA1 family. In terms of assembly, interacts with SEC23A.

It localises to the cytoplasmic vesicle. It is found in the COPII-coated vesicle membrane. The protein resides in the endoplasmic reticulum. Functionally, plays a role in the organization of endoplasmic reticulum exit sites. Specifically binds to phosphatidylinositol 3-phosphate (PI(3)P), phosphatidylinositol 4-phosphate (PI(4)P) and phosphatidylinositol 5-phosphate (PI(5)P). The polypeptide is SEC23-interacting protein (Sec23ip) (Mus musculus (Mouse)).